A 351-amino-acid polypeptide reads, in one-letter code: uncharacterized protein (351 aa).

The protein belongs to the glycosyltransferase group 1 family. Glycosyltransferase 4 subfamily.

This is an uncharacterized protein from Methanocaldococcus jannaschii (strain ATCC 43067 / DSM 2661 / JAL-1 / JCM 10045 / NBRC 100440) (Methanococcus jannaschii).